Consider the following 534-residue polypeptide: MNESPRASYGSTGAHPGYDPVLVIDFGAQYAQLIARRVRECHVYSEIVPWDMPVAEILARRPAALILSGGPKSVYSPGAPRVDPALFAAGVPVLGICYGHQVMAQALDGTVARTGTAEYGATRLRVDDPGVLFDGLPTSQQVWMSHGDSVTAAPPGFRVTASTPSTPVAAFEDPTRRLYGVQFHPEVVHSERGMDVLRHFLLVGAGCRPSWTMINIVEEAVTAVRAQVGNGRLICGLSGGVDSAVAAALVQRAVGDTLTCVFVDHGLLRAGEAEQVERDFVASTGVDLVHVKAADRFASALAGVTDPEQKRKIIGREFIRVFEESARELDARAEAEGTHIGFLVQGTLYPDVIESGSPTAAKIKSHHNVGGLPDDLQFDLVEPLRTLFKDEVRRLGEELGLPEDIVWRQPFPGPGLAVRIIGEVTPERLEIVRAADAVVRDEIRRAGLDREIWQVFAVLLADVRSVGVQGDERTYGFPVVLRAVTSEDAMTADWARLPYDLLERISNRVVNEVGQVNRVVYDITSKPPGTIEWE.

The 191-residue stretch at 20 to 210 (PVLVIDFGAQ…LLVGAGCRPS (191 aa)) folds into the Glutamine amidotransferase type-1 domain. Residue Cys-97 is the Nucleophile of the active site. Catalysis depends on residues His-184 and Glu-186. Residues 211–408 (WTMINIVEEA…LGLPEDIVWR (198 aa)) enclose the GMPS ATP-PPase domain. An ATP-binding site is contributed by 238 to 244 (SGGVDSA).

As to quaternary structure, homodimer.

It carries out the reaction XMP + L-glutamine + ATP + H2O = GMP + L-glutamate + AMP + diphosphate + 2 H(+). Its pathway is purine metabolism; GMP biosynthesis; GMP from XMP (L-Gln route): step 1/1. Functionally, catalyzes the synthesis of GMP from XMP. The sequence is that of GMP synthase [glutamine-hydrolyzing] from Parafrankia sp. (strain EAN1pec).